The chain runs to 180 residues: ATP-dependent protease subunit HslV (180 aa).

Residue Thr5 is part of the active site. The Na(+) site is built by Gly165, Cys168, and Thr171.

It belongs to the peptidase T1B family. HslV subfamily. A double ring-shaped homohexamer of HslV is capped on each side by a ring-shaped HslU homohexamer. The assembly of the HslU/HslV complex is dependent on binding of ATP.

Its subcellular location is the cytoplasm. The catalysed reaction is ATP-dependent cleavage of peptide bonds with broad specificity.. Its activity is regulated as follows. Allosterically activated by HslU binding. Functionally, protease subunit of a proteasome-like degradation complex believed to be a general protein degrading machinery. This chain is ATP-dependent protease subunit HslV, found in Helicobacter pylori (strain J99 / ATCC 700824) (Campylobacter pylori J99).